A 706-amino-acid chain; its full sequence is Elongation factor G 1 (706 aa).

One can recognise a tr-type G domain in the interval 8 to 290; the sequence is NRYRNIGICA…AVIDYLPAPT (283 aa). GTP is bound by residues 17-24, 88-92, and 142-145; these read AHVDAGKT, DTPGH, and NKMD.

The protein belongs to the TRAFAC class translation factor GTPase superfamily. Classic translation factor GTPase family. EF-G/EF-2 subfamily.

The protein resides in the cytoplasm. Its function is as follows. Catalyzes the GTP-dependent ribosomal translocation step during translation elongation. During this step, the ribosome changes from the pre-translocational (PRE) to the post-translocational (POST) state as the newly formed A-site-bound peptidyl-tRNA and P-site-bound deacylated tRNA move to the P and E sites, respectively. Catalyzes the coordinated movement of the two tRNA molecules, the mRNA and conformational changes in the ribosome. This chain is Elongation factor G 1, found in Pseudomonas aeruginosa (strain ATCC 15692 / DSM 22644 / CIP 104116 / JCM 14847 / LMG 12228 / 1C / PRS 101 / PAO1).